Consider the following 415-residue polypeptide: Probable N-acetyl-gamma-glutamyl-phosphate reductase, chloroplastic (415 aa).

Residues 1-74 (MGSTALGGGA…SGVKSGEEVR (74 aa)) constitute a chloroplast transit peptide. A disordered region spans residues 48–68 (VRASVASSPQKQHSPKTSGVK). Residues 56 to 67 (PQKQHSPKTSGV) are compositionally biased toward polar residues. Cys219 is an active-site residue.

It belongs to the NAGSA dehydrogenase family. Type 1 subfamily. As to quaternary structure, homotetramer.

The protein resides in the plastid. The protein localises to the chloroplast. It carries out the reaction N-acetyl-L-glutamate 5-semialdehyde + phosphate + NADP(+) = N-acetyl-L-glutamyl 5-phosphate + NADPH + H(+). It functions in the pathway amino-acid biosynthesis; L-arginine biosynthesis; N(2)-acetyl-L-ornithine from L-glutamate: step 3/4. This chain is Probable N-acetyl-gamma-glutamyl-phosphate reductase, chloroplastic, found in Oryza sativa subsp. japonica (Rice).